A 1030-amino-acid chain; its full sequence is Subtilin biosynthesis protein SpaB (1030 aa).

This sequence to S.epidermidis EpiB and L.lactis NisB.

The protein localises to the cell membrane. Functionally, involved in the post-translational modification of the lantibiotic subtilin. The protein is Subtilin biosynthesis protein SpaB (spaB) of Bacillus subtilis.